We begin with the raw amino-acid sequence, 60 residues long: Colanic acid capsular biosynthesis activation protein B (60 aa).

This is Colanic acid capsular biosynthesis activation protein B (rcsB) from Klebsiella aerogenes (Enterobacter aerogenes).